Reading from the N-terminus, the 3507-residue chain is Dynein axonemal heavy chain 14 (3507 aa).

The segment at Pro-91–Gly-126 is disordered. A coiled-coil region spans residues Asp-354–Glu-381. The GPAGTGKT motif signature appears at Gly-1164–Thr-1171. ATP-binding positions include Gly-1164–Thr-1171 and Gly-1427–Thr-1434. Asn-1818 carries N-linked (GlcNAc...) asparagine glycosylation.

This sequence belongs to the dynein heavy chain family. As to quaternary structure, consists of at least two heavy chains and a number of intermediate and light chains.

Its subcellular location is the cytoplasm. It is found in the cytoskeleton. It localises to the cilium axoneme. Functionally, force generating protein of respiratory cilia. Produces force towards the minus ends of microtubules. Dynein has ATPase activity; the force-producing power stroke is thought to occur on release of ADP. Involved in sperm motility; implicated in sperm flagellar assembly. This is Dynein axonemal heavy chain 14 (DNAH14) from Homo sapiens (Human).